A 207-amino-acid chain; its full sequence is MSTELIAAVEAADSAEGLVRAVAALSAARTDAAIPTLISVLAFNNPGAAVVAVDGLIQLGSPAAQAILNNLDDYNYGARAWALRALAGIGEPAALPLLLSAAREDFSLSVRRAATYGLGRVRWADLSESDRLAQQQQCYETLKLCLQYDPEWVVRYAAAAALETLAPAATQLQSAIAETLNRQAHSDEERAVQARSRLAERRLAAGV.

It belongs to the CpcE/RpcE/PecE family. As to quaternary structure, cpcE and CpcF associate to form a lyase.

Required for the chromophorylation of the cpcA gene product. The polypeptide is Phycobilisome maturation protein (cpcF) (Synechococcus elongatus (strain ATCC 33912 / PCC 7942 / FACHB-805) (Anacystis nidulans R2)).